The primary structure comprises 153 residues: Putative riboflavin kinase (153 aa).

The Mg(2+) site is built by Thr-28 and Asn-30. Glu-80 (nucleophile) is an active-site residue.

As to quaternary structure, monomer. It depends on Zn(2+) as a cofactor. The cofactor is Mg(2+).

The protein localises to the cytoplasm. The enzyme catalyses riboflavin + ATP = FMN + ADP + H(+). It participates in cofactor biosynthesis; FMN biosynthesis; FMN from riboflavin (ATP route): step 1/1. Functionally, catalyzes the phosphorylation of riboflavin (vitamin B2) to form flavin-mononucleotide (FMN). This is Putative riboflavin kinase from Drosophila melanogaster (Fruit fly).